The sequence spans 149 residues: Probable flagellum biosynthesis repressor protein FlbT (149 aa).

It belongs to the FlbT family.

Its function is as follows. Has a post-transcriptional repressor function in flagellum biogenesis. Associates with the 5'-UTR of fljK mRNA and promotes its degradation. This Agrobacterium fabrum (strain C58 / ATCC 33970) (Agrobacterium tumefaciens (strain C58)) protein is Probable flagellum biosynthesis repressor protein FlbT.